The sequence spans 343 residues: RNA-binding protein 43 (343 aa).

The RRM domain maps to 15–90; the sequence is RTVVVSGLPV…PRLTVSHFSE (76 aa).

This is RNA-binding protein 43 (Rbm43) from Mus musculus (Mouse).